A 388-amino-acid polypeptide reads, in one-letter code: MIISAASDYRAAAQARLPPFLFHYIDGGAYAEHTLRRNVSDLADVALRQRVLRNMSDLRLSTELFGETLAMPVALGPVGLTGMYARRGEVQAARAAAARGIPFTLSTVSVCPIEEVAPAIERPMWFQLYVLKDRGFMRNALERAKAAGVTTLVFTVDMPTPGARYRDAHSGMSGPNASLRRMLQAVTHPRWAWDVGVLGKPHDLGNISAYRGNPTGLQDYIGWLGANFDPSIAWKDLEWIREFWTGPMVIKGILDPEDARDAVRFGADGIVVSNHGGRQLDGVLSSARALPAIADAVKGELKILADSGIRSGLDVVRMLALGADAVLLGRAFVYALAADGQAGVENLLTLIEKEMRVAMTLTGTHSIAQISADALSRVTREQANAVSP.

The region spanning 1-380 (MIISAASDYR…SADALSRVTR (380 aa)) is the FMN hydroxy acid dehydrogenase domain. Substrate is bound at residue tyrosine 24. Serine 106 and glutamine 127 together coordinate FMN. Tyrosine 129 is a binding site for substrate. Residue threonine 155 coordinates FMN. Residue arginine 164 participates in substrate binding. Lysine 251 is an FMN binding site. Histidine 275 acts as the Proton acceptor in catalysis. Arginine 278 contacts substrate. 306–330 (DSGIRSGLDVVRMLALGADAVLLGR) is a binding site for FMN.

The protein belongs to the FMN-dependent alpha-hydroxy acid dehydrogenase family. It depends on FMN as a cofactor.

It is found in the cell inner membrane. The enzyme catalyses (S)-lactate + A = pyruvate + AH2. Catalyzes the conversion of L-lactate to pyruvate. Is coupled to the respiratory chain. In Xanthomonas oryzae pv. oryzae (strain MAFF 311018), this protein is L-lactate dehydrogenase.